The sequence spans 145 residues: Peptide methionine sulfoxide reductase MsrB (145 aa).

Residues 6–129 (KNERLQQLTD…NSAALRFIPV (124 aa)) enclose the MsrB domain. C118 serves as the catalytic Nucleophile.

The protein belongs to the MsrB Met sulfoxide reductase family.

The catalysed reaction is L-methionyl-[protein] + [thioredoxin]-disulfide + H2O = L-methionyl-(R)-S-oxide-[protein] + [thioredoxin]-dithiol. The protein is Peptide methionine sulfoxide reductase MsrB of Listeria monocytogenes serotype 4b (strain CLIP80459).